A 333-amino-acid polypeptide reads, in one-letter code: Tetraacyldisaccharide 4'-kinase (333 aa).

An ATP-binding site is contributed by 55-62 (TAGGNGKT).

The protein belongs to the LpxK family.

The enzyme catalyses a lipid A disaccharide + ATP = a lipid IVA + ADP + H(+). It participates in glycolipid biosynthesis; lipid IV(A) biosynthesis; lipid IV(A) from (3R)-3-hydroxytetradecanoyl-[acyl-carrier-protein] and UDP-N-acetyl-alpha-D-glucosamine: step 6/6. Transfers the gamma-phosphate of ATP to the 4'-position of a tetraacyldisaccharide 1-phosphate intermediate (termed DS-1-P) to form tetraacyldisaccharide 1,4'-bis-phosphate (lipid IVA). This chain is Tetraacyldisaccharide 4'-kinase, found in Proteus mirabilis (strain HI4320).